The chain runs to 169 residues: Cell division inhibitor SulA (169 aa).

The segment at 106 to 112 (ALRTGNY) is ftsZ binding. Residues 162 to 169 (KIHSNLYH) form a lon protease binding region.

Belongs to the SulA family. Interacts with FtsZ. In terms of processing, is rapidly cleaved and degraded by the Lon protease once DNA damage is repaired.

Functionally, component of the SOS system and an inhibitor of cell division. Accumulation of SulA causes rapid cessation of cell division and the appearance of long, non-septate filaments. In the presence of GTP, binds a polymerization-competent form of FtsZ in a 1:1 ratio, thus inhibiting FtsZ polymerization and therefore preventing it from participating in the assembly of the Z ring. This mechanism prevents the premature segregation of damaged DNA to daughter cells during cell division. The polypeptide is Cell division inhibitor SulA (Salmonella arizonae (strain ATCC BAA-731 / CDC346-86 / RSK2980)).